A 524-amino-acid polypeptide reads, in one-letter code: Putative cysteine ligase BshC (524 aa).

A coiled-coil region spans residues 437–457 (AQALDRSARKINYQIEKMERK).

Belongs to the BshC family.

The sequence is that of Putative cysteine ligase BshC from Solibacter usitatus (strain Ellin6076).